A 716-amino-acid polypeptide reads, in one-letter code: Fatty acid oxidation complex subunit alpha (716 aa).

The segment at 1–189 is enoyl-CoA hydratase/isomerase; the sequence is MIYQSPTIQV…KVGAVDAVVA (189 aa). Position 296 (Asp296) interacts with substrate. A 3-hydroxyacyl-CoA dehydrogenase region spans residues 311-716; sequence KEVNNAAVLG…AANNGSYYQA (406 aa). NAD(+) contacts are provided by residues Met324, Asp343, 400-402, Lys407, and Ser429; that span reads VVE. Residue His450 is the For 3-hydroxyacyl-CoA dehydrogenase activity of the active site. Asn453 contributes to the NAD(+) binding site. Asn500 and Tyr660 together coordinate substrate.

The protein in the N-terminal section; belongs to the enoyl-CoA hydratase/isomerase family. In the C-terminal section; belongs to the 3-hydroxyacyl-CoA dehydrogenase family. Heterotetramer of two alpha chains (FadB) and two beta chains (FadA).

It carries out the reaction a (3S)-3-hydroxyacyl-CoA + NAD(+) = a 3-oxoacyl-CoA + NADH + H(+). It catalyses the reaction a (3S)-3-hydroxyacyl-CoA = a (2E)-enoyl-CoA + H2O. The catalysed reaction is a 4-saturated-(3S)-3-hydroxyacyl-CoA = a (3E)-enoyl-CoA + H2O. The enzyme catalyses (3S)-3-hydroxybutanoyl-CoA = (3R)-3-hydroxybutanoyl-CoA. It carries out the reaction a (3Z)-enoyl-CoA = a 4-saturated (2E)-enoyl-CoA. It catalyses the reaction a (3E)-enoyl-CoA = a 4-saturated (2E)-enoyl-CoA. It participates in lipid metabolism; fatty acid beta-oxidation. In terms of biological role, involved in the aerobic and anaerobic degradation of long-chain fatty acids via beta-oxidation cycle. Catalyzes the formation of 3-oxoacyl-CoA from enoyl-CoA via L-3-hydroxyacyl-CoA. It can also use D-3-hydroxyacyl-CoA and cis-3-enoyl-CoA as substrate. The protein is Fatty acid oxidation complex subunit alpha of Shewanella baltica (strain OS155 / ATCC BAA-1091).